Here is an 865-residue protein sequence, read N- to C-terminus: High affinity cAMP-specific and IBMX-insensitive 3',5'-cyclic phosphodiesterase 8B (865 aa).

Disordered regions lie at residues 17-40 (CRDS…TAPL) and 52-92 (AMPP…TCRG). Polar residues predominate over residues 23-36 (SNSPRQTSSVSQGP). Positions 75–90 (GSGSSTGSSGPATTTC) are enriched in low complexity. The region spanning 247–318 (ACNSVFTALD…DTINTCIKKG (72 aa)) is the PAS domain. The disordered stretch occupies residues 373 to 415 (IHRDSGDNSQTEPHSFRHKSRRKESIDVKSISSRGSDAPSLQN). Over residues 402-415 (SISSRGSDAPSLQN) the composition is skewed to polar residues. Ser497 is subject to Phosphoserine. In terms of domain architecture, PDEase spans 519–855 (TINDVPPSIA…KHWKTLDDLK (337 aa)). His595 serves as the catalytic Proton donor. Residues His599, His635, and Asp636 each contribute to the a divalent metal cation site. 2 positions are modified to phosphoserine: Ser731 and Ser734. A divalent metal cation is bound at residue Asp761.

This sequence belongs to the cyclic nucleotide phosphodiesterase family. PDE8 subfamily. A divalent metal cation serves as cofactor. Widely expressed.

It catalyses the reaction 3',5'-cyclic AMP + H2O = AMP + H(+). Its pathway is purine metabolism; 3',5'-cyclic AMP degradation; AMP from 3',5'-cyclic AMP: step 1/1. Hydrolyzes the second messenger cAMP, which is a key regulator of many important physiological processes. May be involved in specific signaling in the thyroid gland. This chain is High affinity cAMP-specific and IBMX-insensitive 3',5'-cyclic phosphodiesterase 8B (Pde8b), found in Mus musculus (Mouse).